A 402-amino-acid polypeptide reads, in one-letter code: MPKNTPIIRSLLDTDLYKFTMLQVVLHQFPAAHGEYEFRCRNHPDTPLTQLKQQLETQLDLLCELRFSQDELDYLRGLRFIKSDYVDYLELFHLQRRFISVSEEGEQLAIRIKGPMVQAMFFEIFVLAIVNELYFRPLDSKAVREEGRRRLEAKLAELERFQREEAPGQRFPLLIADFGTRRRFSRDWQAHVVERLNHALPQVFRGTSNVYLARKLGITPIGTMAHEFFQAFQALGVRLRDFQKAALESWVQEYRGDLGIALTDVVGMDAFLADFDLYFAKLFDGLRHDSGDPYIWGEKAIAHYRKLRIDPATKMLTFSDGLSVDSALQLQRHFSPHIQVSFGIGTHFTNDMGLEPLQIVLKLVSCNGQPVAKLSDSPGKTMCSDETFLAYLRQVFKVPALA.

His226 is subject to Phosphohistidine; by autocatalysis.

The protein belongs to the NAPRTase family. Transiently phosphorylated on a His residue during the reaction cycle. Phosphorylation strongly increases the affinity for substrates and increases the rate of nicotinate D-ribonucleotide production. Dephosphorylation regenerates the low-affinity form of the enzyme, leading to product release.

It catalyses the reaction nicotinate + 5-phospho-alpha-D-ribose 1-diphosphate + ATP + H2O = nicotinate beta-D-ribonucleotide + ADP + phosphate + diphosphate. It participates in cofactor biosynthesis; NAD(+) biosynthesis; nicotinate D-ribonucleotide from nicotinate: step 1/1. Catalyzes the synthesis of beta-nicotinate D-ribonucleotide from nicotinate and 5-phospho-D-ribose 1-phosphate at the expense of ATP. The sequence is that of Nicotinate phosphoribosyltransferase from Chromobacterium violaceum (strain ATCC 12472 / DSM 30191 / JCM 1249 / CCUG 213 / NBRC 12614 / NCIMB 9131 / NCTC 9757 / MK).